The primary structure comprises 535 residues: Serine/threonine-protein kinase C (535 aa).

A Protein kinase domain is found at 12-277; that stretch reads YRIIETLGRG…AMAQTLQGNF (266 aa). ATP contacts are provided by residues 18–26 and K43; that span reads LGRGGFGET. D142 functions as the Proton acceptor in the catalytic mechanism. The segment at 371–535 is disordered; sequence NNPPPAVEEP…GEKPIDPEQN (165 aa). Over residues 402–421 the composition is skewed to pro residues; the sequence is SPIPTPATPSPEPTPSPSPS. Residues 422 to 435 are compositionally biased toward low complexity; sequence PETTSSPTEDTITP. Composition is skewed to pro residues over residues 446–464 and 472–498; these read APIP…PQPS and TPAP…PTPQ.

This sequence belongs to the protein kinase superfamily. Ser/Thr protein kinase family.

It carries out the reaction L-seryl-[protein] + ATP = O-phospho-L-seryl-[protein] + ADP + H(+). It catalyses the reaction L-threonyl-[protein] + ATP = O-phospho-L-threonyl-[protein] + ADP + H(+). The chain is Serine/threonine-protein kinase C (spkC) from Synechocystis sp. (strain ATCC 27184 / PCC 6803 / Kazusa).